A 222-amino-acid chain; its full sequence is uncharacterized protein (222 aa).

The segment at residues 1–27 is a signal peptide (tat-type signal); that stretch reads MSFTRRKFVLGMGTVIFFTGSASSLLA. 4Fe-4S ferredoxin-type domains follow at residues 37 to 67, 83 to 114, and 115 to 144; these read YAMI…AQGS, TQYH…RDEQ, and GIVR…LNPV. Residues C46, C49, C52, C56, C92, C95, C100, C104, C124, C127, C130, C134, C151, C154, C167, and C171 each contribute to the [4Fe-4S] cluster site.

In terms of processing, exported by the Tat system. The position of the signal peptide cleavage has not been experimentally proven. Can also be exported by the Sec system.

This is an uncharacterized protein from Escherichia coli (strain K12).